The sequence spans 328 residues: Malate dehydrogenase (328 aa).

13-19 contacts NAD(+); that stretch reads GGKGQIA. Substrate contacts are provided by Arg-94 and Arg-100. NAD(+) contacts are provided by residues Asn-107, Gln-114, and 131–133; that span reads VGN. The substrate site is built by Asn-133 and Arg-164. His-189 functions as the Proton acceptor in the catalytic mechanism.

This sequence belongs to the LDH/MDH superfamily. MDH type 2 family.

It carries out the reaction (S)-malate + NAD(+) = oxaloacetate + NADH + H(+). In terms of biological role, catalyzes the reversible oxidation of malate to oxaloacetate. This Chlamydia pneumoniae (Chlamydophila pneumoniae) protein is Malate dehydrogenase.